The sequence spans 267 residues: MKKVTIRDFIKKKSTKEKITILTAYDYPTAKIISNTGLDSILVGDSLGMVVLGYANTLNVTMRDMISHTRAVARANPPQLIVADMPFLSYEIDTKSAVKNAGLLVKAGSDAIKLEGGEEMKDTVKAIVKAGIPVMGHIGLTPQRFLRLGGFRTIGKTKQEEDQLIKDSLELEDAGVFSLVIENTYVDIAKRITEKLNIPTICIGAGPYCDGQVLVINDLLGLSEFTPYFAKSYVNLKEIISNAINQYIIDVKNNKFPEKQHYKEKES.

The Mg(2+) site is built by Asp-45 and Asp-84. 3-methyl-2-oxobutanoate contacts are provided by residues 45-46, Asp-84, and Lys-113; that span reads DS. A Mg(2+)-binding site is contributed by Glu-115. Catalysis depends on Glu-182, which acts as the Proton acceptor.

Belongs to the PanB family. Homodecamer; pentamer of dimers. Mg(2+) serves as cofactor.

It is found in the cytoplasm. The catalysed reaction is 3-methyl-2-oxobutanoate + (6R)-5,10-methylene-5,6,7,8-tetrahydrofolate + H2O = 2-dehydropantoate + (6S)-5,6,7,8-tetrahydrofolate. It functions in the pathway cofactor biosynthesis; coenzyme A biosynthesis. Catalyzes the reversible reaction in which hydroxymethyl group from 5,10-methylenetetrahydrofolate is transferred onto alpha-ketoisovalerate to form ketopantoate. This chain is 3-methyl-2-oxobutanoate hydroxymethyltransferase, found in Saccharolobus islandicus (strain M.16.27) (Sulfolobus islandicus).